The following is a 425-amino-acid chain: MLEIRFVRASPDVVKADLERRGTPEKIAWVDEILAKDARSRELKVQTDELRRRRNTIAREINEARKTGKDAAPLLREAAELPQKIKANDAEQEEISGIIRTRLMRLPNILHESVPKGKDDTENVEIRRVGTPRTFDFELKNHGQLAADNGWADFERAAKTSGAGFYFLKGGLVMLDLALQRFALDLLGKKGFTPVIPPFMIKRDSYEGVTDLDDFEKVMYKIDGDDTYLIATSEHPIAAMYQDEIFEEKDLPLRLCGLSPCFRREIGAHGLDTKGLFRVHQFTKIEQFVFCRPENSWQIHEELLANAEEVFTKLGLPYHVVNICTGDIGTVAAKKYDIEAWMPRENAYKEVVSCSNCTSYQAASLNIRVRDKENFETKHLVHTLNSTAIATSRALRCILENYQNRDGSVTIPDVLRQYMNDREFL.

232–234 (TSE) is an L-serine binding site. ATP contacts are provided by residues 263–265 (RRE) and valine 279. Position 286 (glutamate 286) interacts with L-serine. Residue 350–353 (EVVS) coordinates ATP. An L-serine-binding site is contributed by threonine 387.

The protein belongs to the class-II aminoacyl-tRNA synthetase family. Type-1 seryl-tRNA synthetase subfamily. In terms of assembly, homodimer. The tRNA molecule binds across the dimer.

It is found in the cytoplasm. The catalysed reaction is tRNA(Ser) + L-serine + ATP = L-seryl-tRNA(Ser) + AMP + diphosphate + H(+). It catalyses the reaction tRNA(Sec) + L-serine + ATP = L-seryl-tRNA(Sec) + AMP + diphosphate + H(+). The protein operates within aminoacyl-tRNA biosynthesis; selenocysteinyl-tRNA(Sec) biosynthesis; L-seryl-tRNA(Sec) from L-serine and tRNA(Sec): step 1/1. Functionally, catalyzes the attachment of serine to tRNA(Ser). Is also able to aminoacylate tRNA(Sec) with serine, to form the misacylated tRNA L-seryl-tRNA(Sec), which will be further converted into selenocysteinyl-tRNA(Sec). This Methanoregula boonei (strain DSM 21154 / JCM 14090 / 6A8) protein is Serine--tRNA ligase.